Consider the following 165-residue polypeptide: Nucleotide-binding protein P9215_05621 (165 aa).

The protein belongs to the YajQ family.

Functionally, nucleotide-binding protein. In Prochlorococcus marinus (strain MIT 9215), this protein is Nucleotide-binding protein P9215_05621.